An 88-amino-acid chain; its full sequence is UPF0335 protein Mnod_5968 (88 aa).

This sequence belongs to the UPF0335 family.

This Methylobacterium nodulans (strain LMG 21967 / CNCM I-2342 / ORS 2060) protein is UPF0335 protein Mnod_5968.